The chain runs to 129 residues: Small ribosomal subunit protein uS11 (129 aa).

It belongs to the universal ribosomal protein uS11 family. Part of the 30S ribosomal subunit. Interacts with proteins S7 and S18. Binds to IF-3.

In terms of biological role, located on the platform of the 30S subunit, it bridges several disparate RNA helices of the 16S rRNA. Forms part of the Shine-Dalgarno cleft in the 70S ribosome. The polypeptide is Small ribosomal subunit protein uS11 (Caulobacter vibrioides (strain ATCC 19089 / CIP 103742 / CB 15) (Caulobacter crescentus)).